A 354-amino-acid polypeptide reads, in one-letter code: Ferrochelatase (354 aa).

The Fe cation site is built by histidine 214 and glutamate 295.

The protein belongs to the ferrochelatase family.

The protein localises to the cytoplasm. It catalyses the reaction heme b + 2 H(+) = protoporphyrin IX + Fe(2+). Its pathway is porphyrin-containing compound metabolism; protoheme biosynthesis; protoheme from protoporphyrin-IX: step 1/1. Its function is as follows. Catalyzes the ferrous insertion into protoporphyrin IX. This chain is Ferrochelatase, found in Burkholderia ambifaria (strain ATCC BAA-244 / DSM 16087 / CCUG 44356 / LMG 19182 / AMMD) (Burkholderia cepacia (strain AMMD)).